The sequence spans 152 residues: Transcriptional regulator MraZ (152 aa).

SpoVT-AbrB domains lie at 5–52 (ASAI…PLHE) and 81–124 (AQDC…EESA).

This sequence belongs to the MraZ family. Forms oligomers.

It localises to the cytoplasm. The protein resides in the nucleoid. This chain is Transcriptional regulator MraZ, found in Shewanella frigidimarina (strain NCIMB 400).